A 146-amino-acid chain; its full sequence is Suppressor APC domain-containing protein 1 (146 aa).

Positions His121–Val146 are disordered. The span at Pro137–Val146 shows a compositional bias: pro residues.

The polypeptide is Suppressor APC domain-containing protein 1 (Sapcd1) (Mus musculus (Mouse)).